Reading from the N-terminus, the 88-residue chain is Apolipoprotein C-I (88 aa).

The N-terminal stretch at M1–A26 is a signal peptide.

The protein belongs to the apolipoprotein C1 family.

The protein localises to the secreted. In terms of biological role, inhibitor of lipoprotein binding to the low density lipoprotein (LDL) receptor, LDL receptor-related protein, and very low density lipoprotein (VLDL) receptor. Associates with high density lipoproteins (HDL) and the triacylglycerol-rich lipoproteins in the plasma and makes up about 10% of the protein of the VLDL and 2% of that of HDL. Appears to interfere directly with fatty acid uptake and is also the major plasma inhibitor of cholesteryl ester transfer protein (CETP). Binds free fatty acids and reduces their intracellular esterification. Modulates the interaction of APOE with beta-migrating VLDL and inhibits binding of beta-VLDL to the LDL receptor-related protein. The polypeptide is Apolipoprotein C-I (APOC1) (Eidolon helvum (Straw-colored fruit bat)).